The following is a 197-amino-acid chain: Probable chorismate pyruvate-lyase 2 (197 aa).

Positions 1 to 14 (MRFDAADAHWRETP) are enriched in basic and acidic residues. The interval 1 to 23 (MRFDAADAHWRETPRPGASSAQK) is disordered. Arginine 73, leucine 111, and glutamate 173 together coordinate substrate.

Belongs to the UbiC family.

The protein localises to the cytoplasm. It catalyses the reaction chorismate = 4-hydroxybenzoate + pyruvate. Its pathway is cofactor biosynthesis; ubiquinone biosynthesis. Its function is as follows. Removes the pyruvyl group from chorismate, with concomitant aromatization of the ring, to provide 4-hydroxybenzoate (4HB) for the ubiquinone pathway. This Burkholderia pseudomallei (strain 1710b) protein is Probable chorismate pyruvate-lyase 2.